The following is a 378-amino-acid chain: WUSCHEL-related homeobox 9 (378 aa).

2 disordered regions span residues 1 to 60 and 123 to 173; these read MASS…NPKP and KHSL…GSQM. A compositionally biased stretch (low complexity) spans 32–42; sequence SASHRSSPFSS. Over residues 45-54 the composition is skewed to basic and acidic residues; that stretch reads EVERSPEPKP. The segment at residues 51-115 is a DNA-binding region (homeobox; WUS-type); sequence EPKPRWNPKP…NRKSRSKHKL (65 aa). Composition is skewed to low complexity over residues 137–152 and 161–171; these read PSASSSSSSSSSSSKS and KNNTNLSLGGS.

The protein belongs to the WUS homeobox family. In terms of tissue distribution, expressed in the basal cell and later at the boundary between suspensor and proembryo. Expressed at low levels in proliferating tissues post embryonically. Detected in vegetative shoot apical meristem, leaf primordia, floral meristems, emerging floral organs, epidermal layer of the placenta and in the upper portion of the root meristematic zone.

Its subcellular location is the nucleus. The protein localises to the cytoplasm. Homeodomain transcription factor required for meristem growth and early development. Promotes cell proliferation and prevents premature differentiation in meristematic tissues during postembryonic development. Essential for maintaining tissue growth during embryogenesis. May act by repressing TSS to promote meristematic proliferation. Involved in the transcriptional activation of a subset of cytokinin response factors. May act as a negative regulator of cytokinin signaling in the dark. In Arabidopsis thaliana (Mouse-ear cress), this protein is WUSCHEL-related homeobox 9.